The primary structure comprises 452 residues: tRNA modification GTPase MnmE (452 aa).

(6S)-5-formyl-5,6,7,8-tetrahydrofolate-binding residues include Arg21, Glu78, and Lys118. Positions 214–375 constitute a TrmE-type G domain; sequence GMKVVIAGRP…LREHLKQAMG (162 aa). Asn224 provides a ligand contact to K(+). GTP is bound by residues 224 to 229, 243 to 249, and 268 to 271; these read NAGKSS, TDIAGTT, and DTAG. Ser228 is a Mg(2+) binding site. The K(+) site is built by Thr243, Ile245, and Thr248. Thr249 contributes to the Mg(2+) binding site. A (6S)-5-formyl-5,6,7,8-tetrahydrofolate-binding site is contributed by Lys452.

It belongs to the TRAFAC class TrmE-Era-EngA-EngB-Septin-like GTPase superfamily. TrmE GTPase family. As to quaternary structure, homodimer. Heterotetramer of two MnmE and two MnmG subunits. Requires K(+) as cofactor.

The protein localises to the cytoplasm. Functionally, exhibits a very high intrinsic GTPase hydrolysis rate. Involved in the addition of a carboxymethylaminomethyl (cmnm) group at the wobble position (U34) of certain tRNAs, forming tRNA-cmnm(5)s(2)U34. The sequence is that of tRNA modification GTPase MnmE from Haemophilus influenzae (strain PittEE).